We begin with the raw amino-acid sequence, 335 residues long: Flagellar P-ring protein (335 aa).

The first 24 residues, 1-24 (MNKITNFLILSAVLFFSLIESANA), serve as a signal peptide directing secretion.

The protein belongs to the FlgI family. In terms of assembly, the basal body constitutes a major portion of the flagellar organelle and consists of four rings (L,P,S, and M) mounted on a central rod.

It is found in the periplasm. Its subcellular location is the bacterial flagellum basal body. Its function is as follows. Assembles around the rod to form the L-ring and probably protects the motor/basal body from shearing forces during rotation. The sequence is that of Flagellar P-ring protein from Bdellovibrio bacteriovorus (strain ATCC 15356 / DSM 50701 / NCIMB 9529 / HD100).